We begin with the raw amino-acid sequence, 185 residues long: Ribosome-recycling factor (185 aa).

The interval 136–155 (NDDLKKLEKNGDITEDELRA) is disordered.

Belongs to the RRF family.

The protein resides in the cytoplasm. In terms of biological role, responsible for the release of ribosomes from messenger RNA at the termination of protein biosynthesis. May increase the efficiency of translation by recycling ribosomes from one round of translation to another. The protein is Ribosome-recycling factor of Bacillus velezensis (strain DSM 23117 / BGSC 10A6 / LMG 26770 / FZB42) (Bacillus amyloliquefaciens subsp. plantarum).